We begin with the raw amino-acid sequence, 661 residues long: Sodium/potassium/calcium exchanger 2 (661 aa).

Residues 1-38 lie on the Cytoplasmic side of the membrane; sequence MDLQQSTTITSLEKWCLDESLSGCRRHYSVKKKLKLIR. A helical membrane pass occupies residues 39 to 59; the sequence is VLGLFMGLVAISTVSFSISAF. Residues 60–132 are Extracellular-facing; the sequence is SETDTQSTGE…DIFSLEERRK (73 aa). The segment at 99–120 is disordered; the sequence is PQPPLSKEGESENSTDHAQGDY. The span at 105-120 shows a compositional bias: basic and acidic residues; the sequence is KEGESENSTDHAQGDY. N-linked (GlcNAc...) asparagine glycosylation is present at Asn-111. The helical transmembrane segment at 133–153 threads the bilayer; sequence GAIILHVIGMIYMFIALAIVC. Residues 154–178 lie on the Cytoplasmic side of the membrane; the sequence is DEFFVPSLTVITEKLGISDDVAGAT. Residues 174–214 form an Alpha-1 repeat; sequence VAGATFMAAGGSAPELFTSLIGVFIAHSNVGIGTIVGSAVF. The chain crosses the membrane as a helical span at residues 179-199; the sequence is FMAAGGSAPELFTSLIGVFIA. Over 200–204 the chain is Extracellular; that stretch reads HSNVG. Residues 205–225 form a helical membrane-spanning segment; the sequence is IGTIVGSAVFNILFVIGMCAL. Residues 226 to 243 are Cytoplasmic-facing; the sequence is FSREILNLTWWPLFRDVS. The chain crosses the membrane as a helical span at residues 244 to 264; the sequence is FYIVDLIMLIIFFLDNVIMWW. Position 265 (Glu-265) is a topological domain, extracellular. The chain crosses the membrane as a helical span at residues 266-286; that stretch reads SLLLLTAYFCYVVFMKFNVQV. At 287–497 the chain is on the cytoplasmic side; sequence EKWVKQMINR…PDVRKPSSRK (211 aa). The interval 306–336 is disordered; it reads EAQAKPSAARDKDEPTLPAKPRLQRGGSSAS. Phosphoserine is present on residues Ser-336 and Ser-340. Residues 397–439 form a disordered region; that stretch reads DENERQNGAANHVEKIELPNSTSTDVEMTPSSDASEPVQNGNL. Residues 415 to 439 show a composition bias toward polar residues; the sequence is PNSTSTDVEMTPSSDASEPVQNGNL. Residues 498-518 form a helical membrane-spanning segment; it reads FFPITFFGSITWIAVFSYLMV. Over 519–533 the chain is Extracellular; sequence WWAHQVGETIGISEE. The helical transmembrane segment at 534-554 threads the bilayer; the sequence is IMGLTILAAGTSIPDLITSVI. An Alpha-2 repeat occupies 541 to 572; it reads AAGTSIPDLITSVIVARKGLGDMAVSSSVGSN. The Cytoplasmic segment spans residues 555–569; it reads VARKGLGDMAVSSSV. The helical transmembrane segment at 570–590 threads the bilayer; sequence GSNIFDITVGLPLPWLLYTVI. Topologically, residues 591–602 are extracellular; the sequence is HRFQPVAVSSNG. Residues 603–623 traverse the membrane as a helical segment; that stretch reads LFCAIVLLFIMLLFVILSIAL. The Cytoplasmic segment spans residues 624 to 630; sequence CKWRMNK. The helical transmembrane segment at 631–651 threads the bilayer; sequence ILGFIMFGLYFVFLVVSVLLE. Residues 652-661 are Extracellular-facing; that stretch reads DRILTCPVSI.

This sequence belongs to the Ca(2+):cation antiporter (CaCA) (TC 2.A.19) family. SLC24A subfamily.

The protein localises to the cell membrane. The catalysed reaction is Ca(2+)(out) + K(+)(out) + 4 Na(+)(in) = Ca(2+)(in) + K(+)(in) + 4 Na(+)(out). Functionally, calcium, potassium:sodium antiporter that transports 1 Ca(2+) and 1 K(+) in exchange for 4 Na(+). Required for learming and memory by regulating neuronal Ca(2+), which is essential for the development of synaptic plasticity. The sequence is that of Sodium/potassium/calcium exchanger 2 (SLC24A2) from Homo sapiens (Human).